Consider the following 1021-residue polypeptide: Collagenase ColH (1021 aa).

An N-terminal signal peptide occupies residues 1-30 (MKRKCLSKRLMLAITMATIFTVNSTLPIYA). A propeptide spanning residues 31–40 (AVDKNNATAA) is cleaved from the precursor. Residues 41-320 (VQNESKRYTV…SADQIKRHYD (280 aa)) are activator domain. The interval 41 to 717 (VQNESKRYTV…TYDVVFHGYL (677 aa)) is S1 metalloprotease domain. The catalytic subdomain stretch occupies residues 330 to 601 (PLDKFKKEGK…MQERIDNYEN (272 aa)). D421 contacts Zn(2+). E430 contributes to the Ca(2+) binding site. H455 lines the Zn(2+) pocket. E456 is an active-site residue. H459 lines the Zn(2+) pocket. Residues G463, V467, and G469 each coordinate Ca(2+). E487 contributes to the Zn(2+) binding site. A helper subdomain region spans residues 609–721 (DDYLVRHAYK…VFHGYLPNEG (113 aa)). Residues 718 to 810 (PNEGDSKNSL…VSTTTAEIKD (93 aa)) are S2a domain. Residues N725, S726, D753, D755, D794, N814, K815, D842, D844, D884, E908, E910, N912, N913, T931, D937, Q938, and D939 each contribute to the Ca(2+) site. In terms of domain architecture, PKD 1 spans 727-808 (LPYGKINGTY…SSVSTTTAEI (82 aa)). The S2b domain stretch occupies residues 811-904 (LSENKLPVIY…KIKITDPVYP (94 aa)). The region spanning 816–905 (LPVIYMHVPK…IKITDPVYPI (90 aa)) is the PKD 2 domain. Residues 903-922 (YPIGTEKEPNNSKETASGPI) form a disordered region. The interval 905–1021 (IGTEKEPNNS…RINIEGSVGR (117 aa)) is S3 collagen-binding domain. The tract at residues 1002–1004 (YMF) is collagen-binding.

The protein belongs to the peptidase M9B family. Collagenase subfamily. It depends on Ca(2+) as a cofactor. Zn(2+) serves as cofactor. Post-translationally, upon purification gives rise to 98 kDa, 105 kDa and 116 kDa (full-length) proteins, all of which have the same N-terminus.

Its subcellular location is the secreted. It carries out the reaction Digestion of native collagen in the triple helical region at Xaa-|-Gly bonds. With synthetic peptides, a preference is shown for Gly at P3 and P1', Pro and Ala at P2 and P2', and hydroxyproline, Ala or Arg at P3'.. With respect to regulation, inhibited by EDTA. Inhibited by 1-10-phenanthroline. Inhibited by broad-spectrum zinc metalloprotease inhibitor batimastat. N-aryl mercaptoacetamide-based inhibitors have been isolated that act on clostridial collagenases with submicromolar affinity while having negligibile activity on human collagenases. Functionally, clostridial collagenases are among the most efficient degraders of eukaryotic collagen known; saprophytes use collagen as a carbon source while pathogens additionally digest collagen to aid in host colonization. Has both tripeptidylcarboxypeptidase on Gly-X-Y and endopeptidase activities; the endopeptidase cuts within the triple helix region of collagen while tripeptidylcarboxypeptidase successively digests the exposed ends, thus clostridial collagenases can digest large sections of collagen. The full-length protein has collagenase activity, while both the 116 kDa and 98 kDa forms act on gelatin. In vitro digestion of soluble calf skin collagen fibrils requires both ColG and ColH; ColG forms missing the second collagen-binding domain is also synergistic with ColH, although their overall efficiency is decreased. Digestion of collagen requires Ca(2+) and is inhibited by EDTA. The activator domain (residues 119-388) and catalytic subdomain (330-601) open and close around substrate allowing digestion when the protein is closed. In Hathewaya histolytica (Clostridium histolyticum), this protein is Collagenase ColH.